A 186-amino-acid chain; its full sequence is Small ribosomal subunit protein uS4 (186 aa).

Positions 106–170 (RRLQTIVYRK…SPLKDEDHPI (65 aa)) constitute an S4 RNA-binding domain. Positions 151 to 186 (EEEEVDYSPYSPLKDEDHPIRCEARGESPEETAAEE) are disordered. Over residues 163–178 (LKDEDHPIRCEARGES) the composition is skewed to basic and acidic residues.

This sequence belongs to the universal ribosomal protein uS4 family. As to quaternary structure, part of the 30S ribosomal subunit. Contacts protein S5. The interaction surface between S4 and S5 is involved in control of translational fidelity.

In terms of biological role, one of the primary rRNA binding proteins, it binds directly to 16S rRNA where it nucleates assembly of the body of the 30S subunit. Its function is as follows. With S5 and S12 plays an important role in translational accuracy. This Methanopyrus kandleri (strain AV19 / DSM 6324 / JCM 9639 / NBRC 100938) protein is Small ribosomal subunit protein uS4.